The primary structure comprises 526 residues: Keratin, type I cytoskeletal 10 (526 aa).

Residues 1–16 (MSVRFSSNSRQYSSAR) are compositionally biased toward low complexity. The segment at 1–40 (MSVRFSSNSRQYSSARSGGGGGGGGGGSSIRVSSTKSSLG) is disordered. The head stretch occupies residues 1–144 (MSVRFSSNSR…GDGGGLLSGN (144 aa)). Residues serine 17, serine 38, serine 49, serine 52, and serine 169 each carry the phosphoserine modification. Over residues 17-28 (SGGGGGGGGGGS) the composition is skewed to gly residues. Residues 145 to 180 (EKVTMQNLNDRLASYMNKVRDLEESNYELEGKIKEW) are coil 1A. Residues 145–459 (EKVTMQNLND…SLLEGEGGYV (315 aa)) enclose the IF rod domain. Residues 181–201 (YEKHGNSSQREPRDYSKYYKT) form a linker 1 region. Residues 202 to 293 (IEDLKGQIVN…KNHEEEMKDL (92 aa)) are coil 1B. Residues 294–316 (QNVSTGDVNVEMNAAPGVDLTQL) form a linker 12 region. The coil 2 stretch occupies residues 317–455 (LNNMRNQYEQ…QTYRSLLEGE (139 aa)). Residues 456-526 (GGYVGNLQIT…IESETKKHFY (71 aa)) are tail.

The protein belongs to the intermediate filament family. As to quaternary structure, heterotetramer of two type I and two type II keratins. Heterodimer with KRT1. Two heterodimers of KRT1 and KRT10 form a heterotetramer. The KRT10 subunit in the heterotetramer is probably disulfide-linked.

The protein localises to the secreted. The protein resides in the extracellular space. It is found in the cell surface. It localises to the cytoplasm. Plays a role in the establishment of the epidermal barrier on plantar skin. Involved in the maintenance of cell layer development and keratin filament bundles in suprabasal cells of the epithelium. This chain is Keratin, type I cytoskeletal 10, found in Rattus norvegicus (Rat).